Reading from the N-terminus, the 258-residue chain is Chaperone protein FaeE (258 aa).

An N-terminal signal peptide occupies residues 1 to 34 (MSKRNAVTTFFTNRVTKALGMTLALMMTCQSAMA). Residues 239 to 258 (KKPAAPEAAKAEKADTAEQK) are disordered. Residues 247 to 258 (AKAEKADTAEQK) are compositionally biased toward basic and acidic residues.

Belongs to the periplasmic pilus chaperone family.

It localises to the periplasm. In terms of biological role, mediates assembly of pili by forming soluble multimeric complexes with pili subunits as an intermediate step in the assembly process. This protein is involved in K88 pili assembly. Protects pilin protein from proteolytic degradation by DegP and from premature polymerization. The polypeptide is Chaperone protein FaeE (faeE) (Escherichia coli).